Here is a 210-residue protein sequence, read N- to C-terminus: Small ribosomal subunit protein uS4 (210 aa).

The S4 RNA-binding domain maps to 99–161; it reads RRLDSVIYRM…SKNNATILSA (63 aa).

It belongs to the universal ribosomal protein uS4 family. Part of the 30S ribosomal subunit. Contacts protein S5. The interaction surface between S4 and S5 is involved in control of translational fidelity.

In terms of biological role, one of the primary rRNA binding proteins, it binds directly to 16S rRNA where it nucleates assembly of the body of the 30S subunit. Functionally, with S5 and S12 plays an important role in translational accuracy. The chain is Small ribosomal subunit protein uS4 from Solibacter usitatus (strain Ellin6076).